A 148-amino-acid polypeptide reads, in one-letter code: MEPEAFEICPYDPHHRIPLSRFQYHLASCRRKNPKKAKKMATCKYNACHVVPIKNLEEHEAVCVNRSAVEEEDTENPLKVSPPSSEQNDDTQQVSPCLPSPDIWNVDGANCQHVFVLKTFFPQKVVCENDTKESARETSPQKILRPGQ.

CHHC U11-48K-type zinc fingers lie at residues 6 to 33 (FEIC…RRKN) and 40 to 67 (MATC…VNRS). Cys9, His15, His25, Cys29, Cys43, His49, His59, and Cys63 together coordinate Zn(2+). The tract at residues 67–99 (SAVEEEDTENPLKVSPPSSEQNDDTQQVSPCLP) is disordered. Residues 82-95 (PPSSEQNDDTQQVS) are compositionally biased toward polar residues.

Belongs to the UPF0224 (FAM112) family.

The protein is Gametocyte-specific factor 1-like (GTSF1L) of Homo sapiens (Human).